Consider the following 318-residue polypeptide: Cell growth regulator with EF hand domain protein 1 (318 aa).

The first 19 residues, 1–19 (MLPLTMTVLILLLLPTGQA), serve as a signal peptide directing secretion. 2 consecutive EF-hand domains span residues 69–104 (SREQ…ALAP) and 114–149 (PVIL…ALRH). Asp-82, Asp-84, Ser-86, Gln-88, Glu-93, Asp-127, Asn-129, Asp-131, and Glu-138 together coordinate Ca(2+). Positions 177 to 318 (LRQETQEAPG…HIVQVENDEI (142 aa)) are disordered. 2 stretches are compositionally biased toward basic and acidic residues: residues 186-202 (GPRE…RESL) and 223-233 (GEAEGQAEAKG). Tandem repeats lie at residues 219–235 (PGPR…KGDA), 236–252 (PGPR…EGDA), and 253–269 (PGPR…EGDA). The 4 X 17 AA approximate tandem repeats of P-G-P-R-G-E-A-G-G-Q-A-E-A-[KR]-G-D-A stretch occupies residues 219–286 (PGPRGEAEGQ…GGQAEARENG (68 aa)). Residues 235-272 (APGPRGEAGGQAEAEGDAPGPRGEAGGQAEAEGDAPGP) show a composition bias toward low complexity. Residues 270–286 (PGPRGEAGGQAEARENG) form a 4; approximate repeat. Basic and acidic residues predominate over residues 281–293 (EARENGEEAKELP).

Probably digested extracellularly by an unknown serine protease generating extremely hydrophobic bioactive peptides.

The protein resides in the secreted. In terms of biological role, mediates cell-cell adhesion in a calcium-dependent manner. Able to inhibit growth in several cell lines. This chain is Cell growth regulator with EF hand domain protein 1, found in Homo sapiens (Human).